A 107-amino-acid polypeptide reads, in one-letter code: Holo-[acyl-carrier-protein] synthase (107 aa).

Mg(2+) contacts are provided by Asp-10 and Glu-54.

It belongs to the P-Pant transferase superfamily. AcpS family. Mg(2+) serves as cofactor.

The protein localises to the cytoplasm. The catalysed reaction is apo-[ACP] + CoA = holo-[ACP] + adenosine 3',5'-bisphosphate + H(+). Functionally, transfers the 4'-phosphopantetheine moiety from coenzyme A to a Ser of acyl-carrier-protein. The protein is Holo-[acyl-carrier-protein] synthase of Mycoplasma mobile (strain ATCC 43663 / 163K / NCTC 11711) (Mesomycoplasma mobile).